The sequence spans 168 residues: MERVTIIGIIFAILVVGWILATGQWAYGNVVGPLVNHSKIPLLKITYVSAYENAKGTYLILNITDCCGPDAYPASAPIMEIYNSTWHVFLYSYNISNDTVKVIQAPWNENKKDYTNWYSGFVVILGSEAQFQLQLPFHLSPGTYHIKLYTPAVSSKVLAKQTATFTIS.

Residues 6 to 26 (IIGIIFAILVVGWILATGQWA) traverse the membrane as a helical segment.

Heterodimer of a large and a small subunit in a 2:2 stoichiometry. TQO may associate with the terminal oxidase formed by doxBCE. In terms of processing, the N-terminus is blocked. Post-translationally, glycosylated.

The protein resides in the cell membrane. It carries out the reaction 6-decylubiquinone + 2 thiosulfate = 6-decylubiquinol + tetrathionate. Its activity is regulated as follows. Inhibited by sulfite, metabisulfite and dithonite. TQO plays a role in sulfur oxidation and is proposed to couple sulfur oxidation to dioxygen reduction; caldariellaquinone or sulfolobus quinone seem to serve to transfer electrons to the electron transport chain terminal oxidase formed by DoxBCE. This is Thiosulfate dehydrogenase [quinone] small subunit (doxA) from Acidianus ambivalens (Desulfurolobus ambivalens).